The primary structure comprises 570 residues: Adenine deaminase (570 aa).

Belongs to the metallo-dependent hydrolases superfamily. Adenine deaminase family. It depends on Mn(2+) as a cofactor.

The enzyme catalyses adenine + H2O + H(+) = hypoxanthine + NH4(+). The protein is Adenine deaminase of Petrotoga mobilis (strain DSM 10674 / SJ95).